A 463-amino-acid chain; its full sequence is uncharacterized protein (463 aa).

This is an uncharacterized protein from Alkalihalophilus pseudofirmus (strain ATCC BAA-2126 / JCM 17055 / OF4) (Bacillus pseudofirmus).